We begin with the raw amino-acid sequence, 158 residues long: MDSLNLNVINDDEHPIPNQDLLEKCFALVADKHNISQAEVNVSIVSNQEIQQINKQFRHKDKPTNIISFEFEKPEGLPEDIAANFWGDIVIAPEVLKKEAKEQNKNLDDHWQHIFIHGLLHLLGYDHIDDIEAEEMENLEIELLAELGIANPYIEQEN.

Zn(2+) contacts are provided by histidine 117, histidine 121, and histidine 127.

It belongs to the endoribonuclease YbeY family. Zn(2+) is required as a cofactor.

The protein localises to the cytoplasm. In terms of biological role, single strand-specific metallo-endoribonuclease involved in late-stage 70S ribosome quality control and in maturation of the 3' terminus of the 16S rRNA. In Francisella philomiragia subsp. philomiragia (strain ATCC 25017 / CCUG 19701 / FSC 153 / O#319-036), this protein is Endoribonuclease YbeY.